Reading from the N-terminus, the 367-residue chain is UDP-N-acetylglucosamine--N-acetylmuramyl-(pentapeptide) pyrophosphoryl-undecaprenol N-acetylglucosamine transferase (367 aa).

Residues 10 to 12 (TGG), Asn124, Ser196, and Gln300 contribute to the UDP-N-acetyl-alpha-D-glucosamine site.

Belongs to the glycosyltransferase 28 family. MurG subfamily.

Its subcellular location is the cell membrane. The enzyme catalyses di-trans,octa-cis-undecaprenyl diphospho-N-acetyl-alpha-D-muramoyl-L-alanyl-D-glutamyl-meso-2,6-diaminopimeloyl-D-alanyl-D-alanine + UDP-N-acetyl-alpha-D-glucosamine = di-trans,octa-cis-undecaprenyl diphospho-[N-acetyl-alpha-D-glucosaminyl-(1-&gt;4)]-N-acetyl-alpha-D-muramoyl-L-alanyl-D-glutamyl-meso-2,6-diaminopimeloyl-D-alanyl-D-alanine + UDP + H(+). It participates in cell wall biogenesis; peptidoglycan biosynthesis. Functionally, cell wall formation. Catalyzes the transfer of a GlcNAc subunit on undecaprenyl-pyrophosphoryl-MurNAc-pentapeptide (lipid intermediate I) to form undecaprenyl-pyrophosphoryl-MurNAc-(pentapeptide)GlcNAc (lipid intermediate II). The protein is UDP-N-acetylglucosamine--N-acetylmuramyl-(pentapeptide) pyrophosphoryl-undecaprenol N-acetylglucosamine transferase of Natranaerobius thermophilus (strain ATCC BAA-1301 / DSM 18059 / JW/NM-WN-LF).